The following is a 98-amino-acid chain: MMKSVVLVILGLTLLLETQAMPSSRLSCYRKLLKDRNCHNLPEGRADLKLIDANVQHHFWDGKGCEMICYCNFSELLCCPKDVFFGPKISFVIPCNNH.

A signal peptide spans 1–20; it reads MMKSVVLVILGLTLLLETQA. Asn-72 is a glycosylation site (N-linked (GlcNAc...) asparagine).

This sequence belongs to the SCRG1 family.

The protein localises to the secreted. This Mus musculus (Mouse) protein is Scrapie-responsive protein 1 (Scrg1).